Consider the following 343-residue polypeptide: Small ribosomal subunit biogenesis GTPase RsgA (343 aa).

Positions 116 to 275 (RGQLKPVAAN…LIDSPGIREF (160 aa)) constitute a CP-type G domain. GTP is bound by residues 163 to 166 (NKAD) and 217 to 225 (GQSGVGKSS). Zn(2+) is bound by residues Cys299, Cys304, His306, and Cys312.

This sequence belongs to the TRAFAC class YlqF/YawG GTPase family. RsgA subfamily. Monomer. Associates with 30S ribosomal subunit, binds 16S rRNA. Zn(2+) serves as cofactor.

It is found in the cytoplasm. One of several proteins that assist in the late maturation steps of the functional core of the 30S ribosomal subunit. Helps release RbfA from mature subunits. May play a role in the assembly of ribosomal proteins into the subunit. Circularly permuted GTPase that catalyzes slow GTP hydrolysis, GTPase activity is stimulated by the 30S ribosomal subunit. This Azotobacter vinelandii (strain DJ / ATCC BAA-1303) protein is Small ribosomal subunit biogenesis GTPase RsgA.